Reading from the N-terminus, the 367-residue chain is Fructose-1,6-bisphosphatase class 1 3 (367 aa).

The protein belongs to the FBPase class 1 family. In terms of assembly, homotetramer.

The protein resides in the cytoplasm. The enzyme catalyses beta-D-fructose 1,6-bisphosphate + H2O = beta-D-fructose 6-phosphate + phosphate. Its pathway is carbohydrate biosynthesis; gluconeogenesis. This Paraburkholderia phymatum (strain DSM 17167 / CIP 108236 / LMG 21445 / STM815) (Burkholderia phymatum) protein is Fructose-1,6-bisphosphatase class 1 3.